The chain runs to 396 residues: Subtilisin-like protease 5 (396 aa).

The first 20 residues, 1–20 (MTGFFTFLSFSLAALSVTNA), serve as a signal peptide directing secretion. The propeptide occupies 21 to 116 (AHILSVPKGA…VEPDAIISQH (96 aa)). The region spanning 37-113 (YIVVMKDDTS…VAFVEPDAII (77 aa)) is the Inhibitor I9 domain. Asn63 is a glycosylation site (N-linked (GlcNAc...) asparagine). The Peptidase S8 domain maps to 125 to 396 (PWGLSRLSNR…SRLLYNGSGR (272 aa)). Active-site charge relay system residues include Asp156 and His187. N-linked (GlcNAc...) asparagine glycans are attached at residues Asn230 and Asn248. The active-site Charge relay system is the Ser342. The segment covering 376 to 389 (PTIRNPGPDTTSRL) has biased composition (polar residues). A disordered region spans residues 376–396 (PTIRNPGPDTTSRLLYNGSGR). N-linked (GlcNAc...) asparagine glycosylation occurs at Asn392.

It belongs to the peptidase S8 family.

Its subcellular location is the secreted. In terms of biological role, secreted subtilisin-like serine protease with keratinolytic activity that contributes to pathogenicity. The sequence is that of Subtilisin-like protease 5 (SUB5) from Trichophyton tonsurans (Scalp ringworm fungus).